A 59-amino-acid polypeptide reads, in one-letter code: Protein translocase subunit SecE (59 aa).

A helical transmembrane segment spans residues 33 to 53 (GAGIALVGLLGFIIFAVMTFV).

Belongs to the SecE/SEC61-gamma family. Component of the Sec protein translocase complex. Heterotrimer consisting of SecY (alpha), SecG (beta) and SecE (gamma) subunits. The heterotrimers can form oligomers, although 1 heterotrimer is thought to be able to translocate proteins. Interacts with the ribosome. May interact with SecDF, and other proteins may be involved.

It localises to the cell membrane. Its function is as follows. Essential subunit of the Sec protein translocation channel SecYEG. Clamps together the 2 halves of SecY. May contact the channel plug during translocation. The chain is Protein translocase subunit SecE from Haloarcula marismortui (strain ATCC 43049 / DSM 3752 / JCM 8966 / VKM B-1809) (Halobacterium marismortui).